The primary structure comprises 461 residues: Transforming growth factor beta-1-induced transcript 1 protein (461 aa).

An N-acetylmethionine modification is found at M1. The interval 1–86 (MEDLDALLSD…PPFSSSSGVL (86 aa)) is disordered. The interval 1–200 (MEDLDALLSD…GCPSPPGQTN (200 aa)) is transcription activation. The interaction with PTK2B/PYK2 stretch occupies residues 1–240 (MEDLDALLSD…CNKPIAGQVV (240 aa)). Positions 3 to 15 (DLDALLSDLETTT) match the LD motif 1 motif. T33 bears the Phosphothreonine mark. Position 38 is a phosphotyrosine (Y38). Residues 41–52 (QPQTGSGESSGA) show a composition bias toward polar residues. Position 60 is a phosphotyrosine; by FAK2 and FYN (Y60). A Phosphoserine modification is found at S68. Positions 69–83 (PKSVAPVAPPFSSSS) are enriched in low complexity. Positions 83 to 136 (SGVLGNGLCELDRLLQELNATQFNITDEIMSQFPSSKMAEGEGKEDQSEDKSIT) are interaction with PTK2/FAK1. The LD motif 2 motif lies at 92-104 (ELDRLLQELNATQ). A disordered region spans residues 116–154 (PSSKMAEGEGKEDQSEDKSITTVPSSTFPAPSKPSATSA). The span at 121-134 (AEGEGKEDQSEDKS) shows a compositional bias: basic and acidic residues. The segment covering 135-154 (ITTVPSSTFPAPSKPSATSA) has biased composition (polar residues). S140, S141, S164, and S186 each carry phosphoserine. An LD motif 3 motif is present at residues 157–168 (ELDRLMASLSDF). A disordered region spans residues 171–204 (QNHLPASGPPQPPAVSPTREGCPSPPGQTNKGSL). Phosphothreonine is present on T188. A Phosphoserine modification is found at S194. Residues 203-215 (SLDTMLGLLQSDL) carry the LD motif 4 motif. 4 LIM zinc-binding domains span residues 226 to 285 (GLCG…RFSP), 286 to 343 (RCGF…QLFA), 344 to 403 (PRCQ…QRGS), and 404 to 461 (LCAT…KLFG). A Phosphoserine modification is found at S403. Phosphothreonine is present on T407.

The protein belongs to the paxillin family. Homooligomer. Interacts with PPARG. Interacts with TRAF4. Interacts with CRIP2. Interacts with HSPB1. Interacts with ILK. Interacts with LIMS1 and LIMS2. Interacts with NCK2. Interacts with NUDT16L1. Interacts with PAK. Interacts with PTPN12. Interacts with TCF3. Interacts with TCF7L2. Interacts with VCL. Interacts (via LD motif 3) with GIT1. Also interacts with GIT2. Forms a complex with ARHGEF7. Interacts with AR/androgen receptor in a ligand-dependent manner. Interacts with CSK. Interacts with PTK2/FAK1 and PTK2B/PYK2. Interacts with SLC6A3 and SLC6A4. Interacts with NR3C1. Interacts with SMAD3. Interacts with MAPK15. Interacts with SRC. Interacts with LYN. Interacts with talin. Interacts (via LIM zinc-binding domain 2) with CBLC (via RING-type zinc finger); the interaction is direct and enhances CBLC E3 ubiquitin-protein ligase activity. Interacts with PARVA. Interacts with PXN. Phosphorylated by gonadotropin-releasing hormone-activated SRC. In terms of tissue distribution, strongly expressed in large intestine, lung, spleen, testis, uterus and to a lower extent in brain, kidney and liver (at protein level). In brain, expressed by neuronal and non neuronal cells (at protein level).

It localises to the cell junction. The protein resides in the focal adhesion. Its subcellular location is the nucleus matrix. It is found in the cytoplasm. The protein localises to the cytoskeleton. Its function is as follows. Functions as a molecular adapter coordinating multiple protein-protein interactions at the focal adhesion complex and in the nucleus. Links various intracellular signaling modules to plasma membrane receptors and regulates the Wnt and TGFB signaling pathways. May also regulate SLC6A3 and SLC6A4 targeting to the plasma membrane hence regulating their activity. In the nucleus, functions as a nuclear receptor coactivator regulating glucocorticoid, androgen, mineralocorticoid and progesterone receptor transcriptional activity. May play a role in the processes of cell growth, proliferation, migration, differentiation and senescence. May have a zinc-dependent DNA-binding activity. This Rattus norvegicus (Rat) protein is Transforming growth factor beta-1-induced transcript 1 protein (Tgfb1i1).